The primary structure comprises 177 residues: Large ribosomal subunit protein uL6 (177 aa).

The residue at position 44 (Lys-44) is an N6-acetyllysine.

It belongs to the universal ribosomal protein uL6 family. In terms of assembly, part of the 50S ribosomal subunit.

Functionally, this protein binds to the 23S rRNA, and is important in its secondary structure. It is located near the subunit interface in the base of the L7/L12 stalk, and near the tRNA binding site of the peptidyltransferase center. The protein is Large ribosomal subunit protein uL6 of Escherichia fergusonii (strain ATCC 35469 / DSM 13698 / CCUG 18766 / IAM 14443 / JCM 21226 / LMG 7866 / NBRC 102419 / NCTC 12128 / CDC 0568-73).